A 345-amino-acid chain; its full sequence is L-threonine 3-dehydrogenase (345 aa).

Zn(2+) is bound at residue cysteine 39. Residues threonine 41 and histidine 44 each act as charge relay system in the active site. Residues histidine 64, glutamate 65, cysteine 94, cysteine 97, cysteine 100, and cysteine 108 each coordinate Zn(2+). NAD(+) contacts are provided by residues isoleucine 176, aspartate 196, arginine 201, 263–265 (LGI), and 287–288 (VY).

The protein belongs to the zinc-containing alcohol dehydrogenase family. Homotetramer. The cofactor is Zn(2+).

It localises to the cytoplasm. The enzyme catalyses L-threonine + NAD(+) = (2S)-2-amino-3-oxobutanoate + NADH + H(+). It functions in the pathway amino-acid degradation; L-threonine degradation via oxydo-reductase pathway; glycine from L-threonine: step 1/2. Catalyzes the NAD(+)-dependent oxidation of L-threonine to 2-amino-3-ketobutyrate. The sequence is that of L-threonine 3-dehydrogenase from Anaeromyxobacter sp. (strain K).